A 377-amino-acid polypeptide reads, in one-letter code: Ribosomal RNA large subunit methyltransferase G (377 aa).

The protein belongs to the methyltransferase superfamily. RlmG family.

The protein localises to the cytoplasm. It catalyses the reaction guanosine(1835) in 23S rRNA + S-adenosyl-L-methionine = N(2)-methylguanosine(1835) in 23S rRNA + S-adenosyl-L-homocysteine + H(+). Specifically methylates the guanine in position 1835 (m2G1835) of 23S rRNA. This is Ribosomal RNA large subunit methyltransferase G from Streptomyces coelicolor (strain ATCC BAA-471 / A3(2) / M145).